A 119-amino-acid chain; its full sequence is Urotensin-2B (119 aa).

The signal sequence occupies residues 1–28; that stretch reads MNKILSSTVCFGLLTLLSVLSFLQSVHG. Residues 29-109 constitute a propeptide that is removed on maturation; that stretch reads RPYLTQGNEI…VDGLFSSHPS (81 aa). Cysteine 113 and cysteine 118 form a disulfide bridge.

The protein belongs to the urotensin-2 family.

The protein localises to the secreted. Potent vasoconstrictor. This Homo sapiens (Human) protein is Urotensin-2B (UTS2B).